The sequence spans 68 residues: Large ribosomal subunit protein bL31 (68 aa).

Zn(2+) is bound by residues cysteine 17, cysteine 19, cysteine 37, and cysteine 40.

It belongs to the bacterial ribosomal protein bL31 family. Type A subfamily. In terms of assembly, part of the 50S ribosomal subunit. It depends on Zn(2+) as a cofactor.

Binds the 23S rRNA. The sequence is that of Large ribosomal subunit protein bL31 from Dehalococcoides mccartyi (strain CBDB1).